The following is a 322-amino-acid chain: Acetylglutamate kinase (322 aa).

Substrate is bound by residues 89-90, R111, and N217; that span reads GG.

This sequence belongs to the acetylglutamate kinase family. ArgB subfamily.

It is found in the cytoplasm. The enzyme catalyses N-acetyl-L-glutamate + ATP = N-acetyl-L-glutamyl 5-phosphate + ADP. It participates in amino-acid biosynthesis; L-arginine biosynthesis; N(2)-acetyl-L-ornithine from L-glutamate: step 2/4. Its function is as follows. Catalyzes the ATP-dependent phosphorylation of N-acetyl-L-glutamate. This is Acetylglutamate kinase from Ehrlichia ruminantium (strain Welgevonden).